A 202-amino-acid chain; its full sequence is Adenylyl-sulfate kinase (202 aa).

35 to 42 (GLSGSGKS) contacts ATP. The active-site Phosphoserine intermediate is Ser109.

Belongs to the APS kinase family.

The enzyme catalyses adenosine 5'-phosphosulfate + ATP = 3'-phosphoadenylyl sulfate + ADP + H(+). Its pathway is sulfur metabolism; hydrogen sulfide biosynthesis; sulfite from sulfate: step 2/3. Catalyzes the synthesis of activated sulfate. The sequence is that of Adenylyl-sulfate kinase from Bacteroides fragilis (strain ATCC 25285 / DSM 2151 / CCUG 4856 / JCM 11019 / LMG 10263 / NCTC 9343 / Onslow / VPI 2553 / EN-2).